The chain runs to 146 residues: Deoxyuridine 5'-triphosphate nucleotidohydrolase (146 aa).

Residues 66-68 (RSG), Asn-79, and 83-85 (TID) contribute to the substrate site.

It belongs to the dUTPase family. Mg(2+) is required as a cofactor.

It carries out the reaction dUTP + H2O = dUMP + diphosphate + H(+). It participates in pyrimidine metabolism; dUMP biosynthesis; dUMP from dCTP (dUTP route): step 2/2. This enzyme is involved in nucleotide metabolism: it produces dUMP, the immediate precursor of thymidine nucleotides and it decreases the intracellular concentration of dUTP so that uracil cannot be incorporated into DNA. The protein is Deoxyuridine 5'-triphosphate nucleotidohydrolase of Citrifermentans bemidjiense (strain ATCC BAA-1014 / DSM 16622 / JCM 12645 / Bem) (Geobacter bemidjiensis).